The sequence spans 311 residues: Olfactory receptor 287 (311 aa).

At 1–27 the chain is on the extracellular side; it reads MAWSTGQNLSTPGPFILLGFPGPRSMR. Asn8 carries N-linked (GlcNAc...) asparagine glycosylation. The helical transmembrane segment at 28–53 threads the bilayer; the sequence is IGLFLLFLVMYLLTVVGNLAIISLVG. Over 54 to 60 the chain is Cytoplasmic; the sequence is AHRCLQT. Residues 61-82 form a helical membrane-spanning segment; it reads PMYFFLCNLSFLEIWFTTACVP. The Extracellular segment spans residues 83–103; that stretch reads KTLATFAPRGGVISLAGCATQ. Cys100 and Cys192 are disulfide-bonded. The chain crosses the membrane as a helical span at residues 104–123; sequence MYFVFSLGCTEYFLLAVMAY. The Cytoplasmic segment spans residues 124-142; that stretch reads DRYLAICLPLRYGGIMTPG. The helical transmembrane segment at 143–161 threads the bilayer; it reads LAMRLALGSWLCGFSAITV. Over 162 to 199 the chain is Extracellular; sequence PATLIARLSFCGSRVINHFFCDISPWIVLSCTDTQVVE. The chain crosses the membrane as a helical span at residues 200–222; sequence LVSFGIAFCVILGSCGITLVSYA. The Cytoplasmic segment spans residues 223–239; the sequence is YIITTIIKIPSARGRHR. The helical transmembrane segment at 240–263 threads the bilayer; it reads AFSTCSSHLTVVLIWYGSTIFLHV. At 264-275 the chain is on the extracellular side; sequence RTSVESSLDLTK. The helical transmembrane segment at 276-295 threads the bilayer; that stretch reads AITVLNTIVTPVLNPFIYTL. Residues 296–311 are Cytoplasmic-facing; the sequence is RNKDVKEALRRTVKGK.

This sequence belongs to the G-protein coupled receptor 1 family. As to expression, olfactory epithelium.

The protein localises to the cell membrane. Odorant receptor. In Rattus norvegicus (Rat), this protein is Olfactory receptor 287 (Olr287).